The following is a 397-amino-acid chain: Argininosuccinate synthase (397 aa).

Residues 9–17 and Ala35 each bind ATP; that span reads AFSGGLDTS. 2 residues coordinate L-citrulline: Tyr88 and Ser93. Gly117 is an ATP binding site. L-aspartate is bound by residues Thr119, Asn123, and Asp124. Residue Asn123 participates in L-citrulline binding. Arg127 contributes to the L-citrulline binding site.

The protein belongs to the argininosuccinate synthase family. Type 1 subfamily. In terms of assembly, homotetramer.

Its subcellular location is the cytoplasm. It carries out the reaction L-citrulline + L-aspartate + ATP = 2-(N(omega)-L-arginino)succinate + AMP + diphosphate + H(+). It functions in the pathway amino-acid biosynthesis; L-arginine biosynthesis; L-arginine from L-ornithine and carbamoyl phosphate: step 2/3. The protein is Argininosuccinate synthase of Xanthomonas campestris pv. campestris (strain ATCC 33913 / DSM 3586 / NCPPB 528 / LMG 568 / P 25).